Here is a 354-residue protein sequence, read N- to C-terminus: Alkanal monooxygenase alpha chain (354 aa).

The protein belongs to the bacterial luciferase oxidoreductase family. Heterodimer of an alpha and a beta chain.

It catalyses the reaction a long-chain fatty aldehyde + FMNH2 + O2 = a long-chain fatty acid + hnu + FMN + H2O + 2 H(+). Its function is as follows. Light-emitting reaction in luminous bacteria. The sequence is that of Alkanal monooxygenase alpha chain (luxA) from Aliivibrio fischeri (Vibrio fischeri).